A 92-amino-acid chain; its full sequence is Arrestin-C (92 aa).

Belongs to the arrestin family. As to quaternary structure, homodimer; disulfide-linked in response to retinal illumination. Interacts with CXCR4; the interaction is dependent on the C-terminal phosphorylation of CXCR4 and modulates the calcium ion mobilization activity of CXCR4. Interacts with GPR84. As to expression, retina and pineal gland.

The protein resides in the photoreceptor inner segment. It localises to the cell projection. It is found in the cilium. Its subcellular location is the photoreceptor outer segment. Its function is as follows. May play a role in an as yet undefined retina-specific signal transduction. Could bind to photoactivated-phosphorylated red/green opsins. The sequence is that of Arrestin-C (Arr3) from Rattus norvegicus (Rat).